A 904-amino-acid polypeptide reads, in one-letter code: Exo-beta-D-glucosaminidase (904 aa).

The N-terminal stretch at 1–32 (MFHRPASVRRFVTTAVALGLLSTLSTGARAGA) is a signal peptide. The disordered stretch occupies residues 28 to 49 (ARAGARTHEPPPRPTTVSSTAG). Asp476 (proton donor) is an active-site residue. The Nucleophile role is filled by Glu545. Residues 813–828 (STTAGTDGASTTTVTV) show a composition bias toward low complexity. The segment at 813–833 (STTAGTDGASTTTVTVRNTGS) is disordered.

Belongs to the glycosyl hydrolase 2 family. In terms of assembly, monomer.

It localises to the secreted. The catalysed reaction is Hydrolysis of chitosan or chitosan oligosaccharides to remove successive D-glucosamine residues from the non-reducing termini.. Hydrolyzes chitosan and chitooligosaccharides with retention of anomeric configuration. Has no beta-mannosidase activity. The protein is Exo-beta-D-glucosaminidase of Streptomyces avermitilis (strain ATCC 31267 / DSM 46492 / JCM 5070 / NBRC 14893 / NCIMB 12804 / NRRL 8165 / MA-4680).